A 447-amino-acid chain; its full sequence is Phosphoglucosamine mutase (447 aa).

The active-site Phosphoserine intermediate is the Ser104. The Mg(2+) site is built by Ser104, Asp243, Asp245, and Asp247. Ser104 carries the phosphoserine modification.

Belongs to the phosphohexose mutase family. The cofactor is Mg(2+). In terms of processing, activated by phosphorylation.

It catalyses the reaction alpha-D-glucosamine 1-phosphate = D-glucosamine 6-phosphate. Catalyzes the conversion of glucosamine-6-phosphate to glucosamine-1-phosphate. The protein is Phosphoglucosamine mutase of Corynebacterium diphtheriae (strain ATCC 700971 / NCTC 13129 / Biotype gravis).